A 219-amino-acid chain; its full sequence is ATP phosphoribosyltransferase (219 aa).

It belongs to the ATP phosphoribosyltransferase family. Short subfamily. As to quaternary structure, heteromultimer composed of HisG and HisZ subunits.

The protein localises to the cytoplasm. It carries out the reaction 1-(5-phospho-beta-D-ribosyl)-ATP + diphosphate = 5-phospho-alpha-D-ribose 1-diphosphate + ATP. The protein operates within amino-acid biosynthesis; L-histidine biosynthesis; L-histidine from 5-phospho-alpha-D-ribose 1-diphosphate: step 1/9. Functionally, catalyzes the condensation of ATP and 5-phosphoribose 1-diphosphate to form N'-(5'-phosphoribosyl)-ATP (PR-ATP). Has a crucial role in the pathway because the rate of histidine biosynthesis seems to be controlled primarily by regulation of HisG enzymatic activity. This chain is ATP phosphoribosyltransferase, found in Clostridium kluyveri (strain NBRC 12016).